The primary structure comprises 47 residues: uncharacterized protein (47 aa).

This is an uncharacterized protein from Bacillus subtilis (strain 168).